The primary structure comprises 206 residues: Transcription antitermination protein NusB (206 aa).

Residues 135-206 form a disordered region; the sequence is ARGEKTSAQE…ETQPPGVNEV (72 aa). A compositionally biased stretch (low complexity) spans 169–180; it reads ATPATTPVTTTV.

The protein belongs to the NusB family.

Involved in transcription antitermination. Required for transcription of ribosomal RNA (rRNA) genes. Binds specifically to the boxA antiterminator sequence of the ribosomal RNA (rrn) operons. The polypeptide is Transcription antitermination protein NusB (Heliobacterium modesticaldum (strain ATCC 51547 / Ice1)).